The following is a 381-amino-acid chain: Secretion apparatus protein BsaZ (381 aa).

Helical transmembrane passes span 28–48 (IVAL…VDLT), 80–100 (IAAP…LVQS), 134–154 (AVKA…FADL), and 175–195 (IVLT…VLIV). Residues 343 to 381 (NRGGPPREMPPEATHAPDAHGGDAASGGATSAQAGERNA) are disordered. Residues 364–381 (GDAASGGATSAQAGERNA) are compositionally biased toward low complexity.

The protein belongs to the type III secretion exporter family.

The protein resides in the cell membrane. Part of the bsa type III secretion system, is involved in the intracellular replication of invading bacteria inside the host cell. Probably necessary for the lysis of the vacuole membrane and escape into the host cell cytoplasm. This Burkholderia thailandensis (strain ATCC 700388 / DSM 13276 / CCUG 48851 / CIP 106301 / E264) protein is Secretion apparatus protein BsaZ (bsaZ).